The sequence spans 358 residues: 3-dehydroquinate synthase (358 aa).

NAD(+)-binding positions include 104–108, 128–129, Lys-140, Lys-149, and 167–170; these read GVIGD, TT, and FLNT. Residues Glu-182, His-246, and His-260 each contribute to the Zn(2+) site.

Belongs to the sugar phosphate cyclases superfamily. Dehydroquinate synthase family. Co(2+) serves as cofactor. It depends on Zn(2+) as a cofactor. Requires NAD(+) as cofactor.

Its subcellular location is the cytoplasm. The catalysed reaction is 7-phospho-2-dehydro-3-deoxy-D-arabino-heptonate = 3-dehydroquinate + phosphate. It functions in the pathway metabolic intermediate biosynthesis; chorismate biosynthesis; chorismate from D-erythrose 4-phosphate and phosphoenolpyruvate: step 2/7. Functionally, catalyzes the conversion of 3-deoxy-D-arabino-heptulosonate 7-phosphate (DAHP) to dehydroquinate (DHQ). This chain is 3-dehydroquinate synthase, found in Staphylococcus carnosus (strain TM300).